Consider the following 251-residue polypeptide: Flagellar L-ring protein (251 aa).

Positions 1 to 17 are cleaved as a signal peptide; the sequence is MIRKLAALIVAAAALQA. Cys-18 is lipidated: N-palmitoyl cysteine. A lipid anchor (S-diacylglycerol cysteine) is attached at Cys-18.

It belongs to the FlgH family. In terms of assembly, the basal body constitutes a major portion of the flagellar organelle and consists of four rings (L,P,S, and M) mounted on a central rod.

The protein resides in the cell outer membrane. It localises to the bacterial flagellum basal body. Functionally, assembles around the rod to form the L-ring and probably protects the motor/basal body from shearing forces during rotation. The polypeptide is Flagellar L-ring protein (Maricaulis maris (strain MCS10) (Caulobacter maris)).